We begin with the raw amino-acid sequence, 370 residues long: Phosphate acyltransferase (370 aa).

Residues 349–370 form a disordered region; that stretch reads SAGRAGQDAPDEMAAPGRSEKR.

This sequence belongs to the PlsX family. In terms of assembly, homodimer. Probably interacts with PlsY.

The protein resides in the cytoplasm. The enzyme catalyses a fatty acyl-[ACP] + phosphate = an acyl phosphate + holo-[ACP]. It functions in the pathway lipid metabolism; phospholipid metabolism. Catalyzes the reversible formation of acyl-phosphate (acyl-PO(4)) from acyl-[acyl-carrier-protein] (acyl-ACP). This enzyme utilizes acyl-ACP as fatty acyl donor, but not acyl-CoA. This chain is Phosphate acyltransferase, found in Cereibacter sphaeroides (strain ATCC 17023 / DSM 158 / JCM 6121 / CCUG 31486 / LMG 2827 / NBRC 12203 / NCIMB 8253 / ATH 2.4.1.) (Rhodobacter sphaeroides).